The following is a 705-amino-acid chain: Putative membrane protein SCO0839 (705 aa).

Transmembrane regions (helical) follow at residues 16–36, 177–197, 202–222, 237–257, 281–301, 316–336, 373–393, 529–549, 554–574, 587–607, 627–647, and 648–668; these read WLVPVLLLLVWLVVGGALGPY, GIDGLLLAVALITVLVILLLV, LLPLVIILSAVFALALSCAIV, VQGILSILVIGAATDYALLLT, SWGAVVASAATVALGLLALLL, IGIVCSVLSTLTFLPAVLVLL, IWALSLAALLACAAFAPTLSS, LIVPVVLAIILVILILLLRSL, LLVATVALNFLATLGVSALVF, VPLYGFVFLVALGVDYNIFLM, LTATGGVITSAGVVLAATFAA, and LGVIPLAFLLQIAFIVAFGVL.

The protein belongs to the resistance-nodulation-cell division (RND) (TC 2.A.6) family. MmpL subfamily.

The protein resides in the cell membrane. The protein is Putative membrane protein SCO0839 of Streptomyces coelicolor (strain ATCC BAA-471 / A3(2) / M145).